A 285-amino-acid chain; its full sequence is Protein HEXIM1 (285 aa).

Disordered regions lie at residues 1-56 and 132-196; these read MSEV…QNPG and LMED…LQKD. The span at 23-36 shows a compositional bias: basic and acidic residues; sequence GGWHHPVEREEHPV. Residues 168–180 are compositionally biased toward acidic residues; that stretch reads TDDDLEEEEDEAG. Residues 213–284 are a coiled coil; that stretch reads SKQDLIKEYL…QEGKQVAADS (72 aa).

The protein belongs to the HEXIM family. As to quaternary structure, homooligomer and heterooligomer. Core component of the 7SK RNP complex.

It localises to the nucleus. The protein localises to the cytoplasm. Functionally, transcriptional regulator which functions as a general RNA polymerase II transcription inhibitor. Core component of the 7SK RNP complex: in cooperation with 7SK snRNA sequesters P-TEFb in a large inactive 7SK snRNP complex preventing RNA polymerase II phosphorylation and subsequent transcriptional elongation. Plays a role in the regulation of DNA virus-mediated innate immune response by assembling into the HDP-RNP complex, a complex that serves as a platform for IRF3 phosphorylation and subsequent innate immune response activation through the cGAS-STING pathway. The chain is Protein HEXIM1 (hexim1) from Xenopus laevis (African clawed frog).